Consider the following 158-residue polypeptide: Transcription elongation factor GreA (158 aa).

Residues Glu47 to Ala75 adopt a coiled-coil conformation.

This sequence belongs to the GreA/GreB family.

Functionally, necessary for efficient RNA polymerase transcription elongation past template-encoded arresting sites. The arresting sites in DNA have the property of trapping a certain fraction of elongating RNA polymerases that pass through, resulting in locked ternary complexes. Cleavage of the nascent transcript by cleavage factors such as GreA or GreB allows the resumption of elongation from the new 3'terminus. GreA releases sequences of 2 to 3 nucleotides. In Oceanobacillus iheyensis (strain DSM 14371 / CIP 107618 / JCM 11309 / KCTC 3954 / HTE831), this protein is Transcription elongation factor GreA.